Here is a 523-residue protein sequence, read N- to C-terminus: Endoglucanase 19 (523 aa).

The first 52 residues, 1-52, serve as a signal peptide directing secretion; that stretch reads MCSWSLSSHTLTSPVRQAAMEPKSSSCGGAGIRLRLLVVLHLLLLVPSSAMA. Aspartate 107 (nucleophile) is an active-site residue. N-linked (GlcNAc...) asparagine glycosylation is present at asparagine 279. Residues histidine 442, aspartate 493, and glutamate 502 contribute to the active site.

It belongs to the glycosyl hydrolase 9 (cellulase E) family.

The protein resides in the secreted. It catalyses the reaction Endohydrolysis of (1-&gt;4)-beta-D-glucosidic linkages in cellulose, lichenin and cereal beta-D-glucans.. This chain is Endoglucanase 19, found in Oryza sativa subsp. japonica (Rice).